The sequence spans 514 residues: Extracellular exo-inulinase inuE (514 aa).

The first 18 residues, 1–18 (MRAFLALIFLTFVMNVES), serve as a signal peptide directing secretion. Substrate-binding positions include 33 to 34 (ND) and Gln-52. Residue Asp-34 is the Nucleophile of the active site. An N-linked (GlcNAc...) asparagine glycan is attached at Asn-56. 2 residues coordinate substrate: Trp-60 and Ser-95. Asn-104 and Asn-110 each carry an N-linked (GlcNAc...) asparagine glycan. 162–163 (RD) contributes to the substrate binding site. 2 N-linked (GlcNAc...) asparagine glycosylation sites follow: Asn-197 and Asn-203. Substrate is bound by residues Glu-214 and Trp-300. Glu-214 acts as the Proton donor/acceptor in catalysis. Asn-357, Asn-371, Asn-389, and Asn-422 each carry an N-linked (GlcNAc...) asparagine glycan.

It belongs to the glycosyl hydrolase 32 family.

Its subcellular location is the secreted. The catalysed reaction is Hydrolysis of terminal, non-reducing (2-&gt;1)- and (2-&gt;6)-linked beta-D-fructofuranose residues in fructans.. In terms of biological role, exo-inulinase involved in utilization of the plant storage polymer inulin, consisting of fructooligosaccharides with a degree of polymerization (DP) value from 2 to 60. Splits off terminal fructose units successively from the non-reducing end of the inulin molecule. In Meyerozyma guilliermondii (Yeast), this protein is Extracellular exo-inulinase inuE.